Here is a 723-residue protein sequence, read N- to C-terminus: Homeobox protein HAT3.1 (723 aa).

The segment covering 1–10 has biased composition (basic residues); sequence MYKAVSKRVT. Disordered stretches follow at residues 1-94 and 135-173; these read MYKA…GSHR and KRAQ…QVRE. The segment covering 11 to 23 has biased composition (polar residues); that stretch reads RSSGSGLKQTNVD. Basic and acidic residues predominate over residues 58–83; that stretch reads LHHEIMDHGKGNEEQKPTPQTVKKDS. The PHD-type zinc finger occupies 265–322; sequence DIFCAKCGSKDLSVDNDIILCDGFCDRGFHQYCLEPPLRKEDIPPDDEGWLCPGCDCK. 2 disordered regions span residues 357–628 and 680–723; these read GGQN…KTQR and VEKL…RRRK. Residues 365–407 are compositionally biased toward acidic residues; sequence LPSDDSDDEEYDPDCLNDNENDEDGSDDNEESENEDGSSDETE. The span at 417–427 shows a compositional bias: basic and acidic residues; that stretch reads ESFKEGKDIMK. The span at 435–453 shows a compositional bias: acidic residues; that stretch reads DDSEDDDYDPDAPTCDDDK. Composition is skewed to basic and acidic residues over residues 518 to 530 and 547 to 556; these read RNVE…KLYD and DKTARMGKED. Over residues 580–589 the composition is skewed to basic residues; it reads KKLIRKSKRA. Positions 614 to 673 form a DNA-binding region, homeobox; sequence SSSSACKQTDPKTQRLYISFQENQYPDKATKESLAKELQMTVKQVNNWFKHRRWSINSKP. Residues 680–690 show a composition bias toward basic and acidic residues; the sequence is VEKLKTGKEGE. Residues 695–705 show a composition bias toward polar residues; sequence VAGSSKQTMET.

Belongs to the PHD-associated homeobox family. In terms of tissue distribution, primarily detected in root tissue.

It is found in the nucleus. Its function is as follows. Binds only to large DNA fragments. Recognizes a DNA fragment carrying 8 copies of box7 motif of the light-induced cab-E promoter of Nicotiana plumbaginifolia. Also recognizes the box7m1 motif. This Arabidopsis thaliana (Mouse-ear cress) protein is Homeobox protein HAT3.1 (HAT3.1).